The sequence spans 329 residues: Zygote arrest protein 1 (329 aa).

Disordered regions lie at residues 106–132 (LRRR…RTQA) and 146–218 (FREE…DDLK). A compositionally biased stretch (acidic residues) spans 149–162 (EGEEEEDTDLEVTE). The segment covering 166–177 (SAEKLESAEKNV) has biased composition (basic and acidic residues). The 3CxxC-type zinc finger occupies 231–314 (KYGFYHCKDC…RQDLCGRCKG (84 aa)).

This sequence belongs to the ZAR1 family. Specifically expressed in ovaries but absent in testes.

It is found in the cytoplasm. The protein resides in the cytoplasmic ribonucleoprotein granule. Its function is as follows. mRNA-binding protein required for maternal mRNA storage, translation and degradation during oocyte maturation. Probably promotes formation of some phase-separated membraneless compartment that stores maternal mRNAs in oocytes: acts by undergoing liquid-liquid phase separation upon binding to maternal mRNAs. Binds to the 3'-UTR of zona pellucida mRNAs, inhibiting their translation. The sequence is that of Zygote arrest protein 1 from Danio rerio (Zebrafish).